The following is a 253-amino-acid chain: Ubiquinone/menaquinone biosynthesis C-methyltransferase UbiE (253 aa).

S-adenosyl-L-methionine contacts are provided by residues Thr76, Asp97, 125 to 126 (NA), and Ser142.

It belongs to the class I-like SAM-binding methyltransferase superfamily. MenG/UbiE family.

It carries out the reaction a 2-demethylmenaquinol + S-adenosyl-L-methionine = a menaquinol + S-adenosyl-L-homocysteine + H(+). The enzyme catalyses a 2-methoxy-6-(all-trans-polyprenyl)benzene-1,4-diol + S-adenosyl-L-methionine = a 5-methoxy-2-methyl-3-(all-trans-polyprenyl)benzene-1,4-diol + S-adenosyl-L-homocysteine + H(+). Its pathway is quinol/quinone metabolism; menaquinone biosynthesis; menaquinol from 1,4-dihydroxy-2-naphthoate: step 2/2. It participates in cofactor biosynthesis; ubiquinone biosynthesis. In terms of biological role, methyltransferase required for the conversion of demethylmenaquinol (DMKH2) to menaquinol (MKH2) and the conversion of 2-polyprenyl-6-methoxy-1,4-benzoquinol (DDMQH2) to 2-polyprenyl-3-methyl-6-methoxy-1,4-benzoquinol (DMQH2). The chain is Ubiquinone/menaquinone biosynthesis C-methyltransferase UbiE from Xylella fastidiosa (strain M23).